The sequence spans 211 residues: Protein-L-isoaspartate O-methyltransferase (211 aa).

Ser60 is a catalytic residue.

The protein belongs to the methyltransferase superfamily. L-isoaspartyl/D-aspartyl protein methyltransferase family.

The protein localises to the cytoplasm. The enzyme catalyses [protein]-L-isoaspartate + S-adenosyl-L-methionine = [protein]-L-isoaspartate alpha-methyl ester + S-adenosyl-L-homocysteine. Catalyzes the methyl esterification of L-isoaspartyl residues in peptides and proteins that result from spontaneous decomposition of normal L-aspartyl and L-asparaginyl residues. It plays a role in the repair and/or degradation of damaged proteins. The sequence is that of Protein-L-isoaspartate O-methyltransferase from Pseudomonas syringae pv. syringae (strain B728a).